Here is a 171-residue protein sequence, read N- to C-terminus: uncharacterized protein (171 aa).

A signal peptide spans 1–20; the sequence is MRDFYLFLGAVFLLVLGVWA.

This is an uncharacterized protein from Aquifex aeolicus (strain VF5).